Reading from the N-terminus, the 505-residue chain is Phosphoglycerate kinase A (505 aa).

Positions 32, 33, 34, 35, 48, 70, 71, 73, 74, 224, 260, and 261 each coordinate (2R)-3-phosphoglycerate. Residues G306 and A307 each coordinate ADP. CDP is bound at residue G306. The AMP site is built by A307 and K308. A307 lines the ATP pocket. A307 is a Mg(2+) binding site. K308 provides a ligand contact to (2R)-3-phosphoglycerate. A CDP-binding site is contributed by E311. E311 lines the Mg(2+) pocket. Positions 312 and 330 each coordinate ADP. K312 contacts AMP. K312 lines the ATP pocket. G330 contributes to the CDP binding site. AMP-binding residues include A331 and A403. ATP-binding residues include A331 and A403. Positions 403 and 427 each coordinate ADP. CDP-binding residues include G428 and F433. Residues F433, E434, E466, and S467 each contribute to the ADP site. E434 is an AMP binding site. ATP contacts are provided by E434, E466, and S467. E466 lines the Mg(2+) pocket.

The protein belongs to the phosphoglycerate kinase family. Monomer. Mg(2+) serves as cofactor.

The enzyme catalyses (2R)-3-phosphoglycerate + ATP = (2R)-3-phospho-glyceroyl phosphate + ADP. The protein operates within carbohydrate degradation; glycolysis; pyruvate from D-glyceraldehyde 3-phosphate: step 2/5. The sequence is that of Phosphoglycerate kinase A from Trypanosoma brucei brucei.